Reading from the N-terminus, the 241-residue chain is Pyridoxal phosphate phosphatase PHOSPHO2 (241 aa).

Asp8 serves as the catalytic Nucleophile. Mg(2+) contacts are provided by Asp8 and Asp10. The Proton donor role is filled by Asp10. 2 residues coordinate substrate: Asp19 and Asp99. Asp179 provides a ligand contact to Mg(2+).

Belongs to the HAD-like hydrolase superfamily. PHOSPHO family. Mg(2+) serves as cofactor.

It carries out the reaction pyridoxal 5'-phosphate + H2O = pyridoxal + phosphate. Its function is as follows. Phosphatase that has high activity toward pyridoxal 5'-phosphate (PLP). Also active at much lower level toward pyrophosphate, phosphoethanolamine (PEA), phosphocholine (PCho), phospho-l-tyrosine, fructose-6-phosphate, p-nitrophenyl phosphate, and h-glycerophosphate. The polypeptide is Pyridoxal phosphate phosphatase PHOSPHO2 (PHOSPHO2) (Homo sapiens (Human)).